The chain runs to 582 residues: Potassium voltage-gated channel subfamily KQT member 1 (582 aa).

Residues 1–31 (RVSIYSARRPLLARTHIQGRVYNFLERPTGW) lie on the Cytoplasmic side of the membrane. Residues 32–53 (KCFVYHFAVFLIVLVCLIFSVL) traverse the membrane as a helical segment. The Extracellular segment spans residues 54-64 (STIEQYVALAT). A helical membrane pass occupies residues 65-87 (GTLFWMEIVLVVFFGTEYVVRLW). Residues 88–103 (SAGCRSKYVGVWGRLR) are Cytoplasmic-facing. A helical transmembrane segment spans residues 104 to 129 (FARKPISIIDLIVVLASMVVLCVGSK). At 130–137 (GQVFATSA) the chain is on the extracellular side. A helical; Voltage-sensor transmembrane segment spans residues 138-153 (IRGIRFLQILRMLHVD). An interaction with KCNE3 region spans residues 149–157 (MLHVDRQGG). Residues 154 to 171 (RQGGTWRLLGSVVFIHRQ) lie on the Cytoplasmic side of the membrane. Position 155 (Gln155) interacts with a 1,2-diacyl-sn-glycero-3-phospho-(1D-myo-inositol-4,5-bisphosphate). Residues 172-194 (ELITTLYIGFLGLIFSSYFVYLA) traverse the membrane as a helical segment. Residues 195–210 (EKDAVNESGQVEFGSY) lie on the Extracellular side of the membrane. The N-linked (GlcNAc...) asparagine glycan is linked to Asn200. Positions 211–231 (ADALWWGVVTVTTIGYGDKVP) form an intramembrane region, pore-forming. At 232-233 (QT) the chain is on the extracellular side. A helical membrane pass occupies residues 234–259 (WVGKTIASCFSVFAISFFALPAGILG). At 260–582 (SGFALKVQQK…VPRRGPEEGS (323 aa)) the chain is on the cytoplasmic side. Residues 281–293 (AAASLIQTAWRCY) form an interaction with CALM region. Ser318 and Ser320 each carry phosphoserine. The tract at residues 426-440 (KVIRRMQYFVAKKKF) is interaction with CALM; calcium-dependent. An interaction with KCNE1 C-terminus region spans residues 446–483 (PYDVRDVIEQYSQGHLNLMVRIKELQRRLDQSIGKPSL). Residues 496 to 532 (SNTIGARLNRVEDKVAQLDQRLVLITDMLQQLLSLHH) are a coiled coil. The interval 499 to 527 (IGARLNRVEDKVAQLDQRLVLITDMLQQL) is interaction with AKAP9. Positions 500–531 (GARLNRVEDKVAQLDQRLVLITDMLQQLLSLH) are C-terminal assembly domain (tetramerization). The segment at 530-582 (LHHGGPPGSRPPSGGGAQVQPCGPTNPELFLPGNALPTYEQLTVPRRGPEEGS) is disordered.

It belongs to the potassium channel family. KQT (TC 1.A.1.15) subfamily. Kv7.1/KCNQ1 sub-subfamily. As to quaternary structure, tetramer. Heterotetramer with KCNE1; targets to the membrane raft. Interacts (via C-terminus) with CALM; forms a heterooctameric structure (with 4:4 KCNQ1:CALM stoichiometry) in a calcium-independent manner. Interacts with AKAP9; targets protein kinase A (PKA) catalytic and regulatory subunits and protein phosphatase 1 (PP1) to the KCNQ1-KCNE1 complex, allowing PKA-mediated phosphorylation and increase of delayed rectifier potassium channel activity. Interacts with KCNE2; form a heterooligomer complex that targets to the membrane raft and leading to currents with an apparently instantaneous activation, a rapid deactivation process and a linear current-voltage relationship and decreases the amplitude of the outward current. Interacts with AP2M1; mediates estrogen-induced internalization via clathrin-coated vesicles. Interacts with NEDD4L; promotes internalization and decreases I(Ks) currents. Interacts with USP2; counteracts the NEDD4L-specific down-regulation of I(Ks) and restore plasma membrane localization. Heterotetramer with KCNQ5; has a voltage-gated potassium channel activity. Interacts with KCNE3; four KCNE3 molecules are bound to one KCNQ1 tetramer (4:4 KCNQ1:KCNE3 stoichiometry); alters membrane raft localization; affects KCNQ1 structure and gating properties. Interacts with KCNE4; impairs KCNQ1 localization in lipid rafts and inhibits voltage-gated potassium channel activity. Interacts with KCNE5; impairs KCNQ1 localization in lipid rafts and only conducts current upon strong and continued depolarization. Post-translationally, phosphorylated by PKA; increases delayed rectifier potassium channel activity of the KCNQ1-KCNE1 complex through a macromolecular complex that includes PKA, PP1, and the targeting protein AKAP9. Ubiquitinated by NEDD4L; promotes internalization. The ubiquitinylated form is internalized through a clathrin-mediated endocytosis by interacting with AP2M1 and is recycled back to the cell membrane via RAB4A and RAB11A. In terms of processing, deubiquitinated by USP2; counteracts the NEDD4L-specific down-regulation of I(Ks) and restores the membrane localization.

It localises to the cell membrane. It is found in the cytoplasmic vesicle membrane. The protein resides in the early endosome. Its subcellular location is the membrane raft. The protein localises to the endoplasmic reticulum. It localises to the basolateral cell membrane. The catalysed reaction is K(+)(in) = K(+)(out). Its activity is regulated as follows. PIP2 molecule is essential to activate KCNQ channels by inducing the coupling of the voltage-sensing domain (VSD) and the pore-forming domain (PD). Upon channel activation, PIP2 disrupts the VSD-calmodulin/CALM interactions, causing the release of CALM from the VSD which triggers the opening of the gate. Calcium potentiates KCNQ1 channel current through calcium-bound CALM. Calcium-bound CALM competes with PIP2 to stabilize the channel open state. In terms of biological role, pore-forming subunit of the voltage-gated potassium (Kv) channel involved in the regulation of cardiomyocyte excitability and important in normal development and functions of myocardium, inner ear, stomach and colon. Associates with KCNE beta subunits that modulates current kinetics. Induces a voltage-dependent by rapidly activating and slowly deactivating potassium-selective outward current. Also promotes a delayed voltage activated potassium current showing outward rectification characteristic. During beta-adrenergic receptor stimulation participates in cardiac repolarization by associating with KCNE1 to form the I(Ks) cardiac potassium current that increases the amplitude and slows down the activation kinetics of outward potassium current I(Ks). Muscarinic agonist oxotremorine-M strongly suppresses KCNQ1/KCNE1 current. When associated with KCNE3, forms the potassium channel that is important for cyclic AMP-stimulated intestinal secretion of chloride ions. This interaction with KCNE3 is reduced by 17beta-estradiol, resulting in the reduction of currents. During conditions of increased substrate load, maintains the driving force for proximal tubular and intestinal sodium ions absorption, gastric acid secretion, and cAMP-induced jejunal chloride ions secretion. Allows the provision of potassium ions to the luminal membrane of the secretory canaliculus in the resting state as well as during stimulated acid secretion. When associated with KCNE2, forms a heterooligomer complex leading to currents with an apparently instantaneous activation, a rapid deactivation process and a linear current-voltage relationship and decreases the amplitude of the outward current. When associated with KCNE4, inhibits voltage-gated potassium channel activity. When associated with KCNE5, this complex only conducts current upon strong and continued depolarization. Also forms a heterotetramer with KCNQ5 that has a voltage-gated potassium channel activity. Binds with phosphatidylinositol 4,5-bisphosphate. This chain is Potassium voltage-gated channel subfamily KQT member 1, found in Felis catus (Cat).